Here is a 386-residue protein sequence, read N- to C-terminus: Patatin-15 (386 aa).

The signal sequence occupies residues Met-1–Ala-23. Residues Leu-32–Leu-229 form the PNPLA domain. A GXGXXG motif is present at residues Gly-36 to Gly-41. Residues Gly-75–Gly-79 carry the GXSXG motif. Residue Ser-77 is the Nucleophile of the active site. Asn-115 carries an N-linked (GlcNAc...) asparagine glycan. Residue Asp-215 is the Proton acceptor of the active site. The short motif at Asp-215–Gly-217 is the DGA/G element. The stretch at Glu-321–Ala-384 forms a coiled coil.

The protein belongs to the patatin family. As to expression, tuber.

The protein resides in the vacuole. Probable lipolytic acyl hydrolase (LAH), an activity which is thought to be involved in the response of tubers to pathogens. This is Patatin-15 from Solanum tuberosum (Potato).